A 377-amino-acid polypeptide reads, in one-letter code: Succinyl-diaminopimelate desuccinylase (377 aa).

His-66 serves as a coordination point for Zn(2+). Asp-68 is an active-site residue. Asp-99 is a Zn(2+) binding site. Residue Glu-133 is the Proton acceptor of the active site. Residues Glu-134, Glu-162, and His-348 each contribute to the Zn(2+) site.

The protein belongs to the peptidase M20A family. DapE subfamily. As to quaternary structure, homodimer. The cofactor is Zn(2+). Co(2+) serves as cofactor.

It carries out the reaction N-succinyl-(2S,6S)-2,6-diaminopimelate + H2O = (2S,6S)-2,6-diaminopimelate + succinate. It participates in amino-acid biosynthesis; L-lysine biosynthesis via DAP pathway; LL-2,6-diaminopimelate from (S)-tetrahydrodipicolinate (succinylase route): step 3/3. Functionally, catalyzes the hydrolysis of N-succinyl-L,L-diaminopimelic acid (SDAP), forming succinate and LL-2,6-diaminopimelate (DAP), an intermediate involved in the bacterial biosynthesis of lysine and meso-diaminopimelic acid, an essential component of bacterial cell walls. This chain is Succinyl-diaminopimelate desuccinylase, found in Xylella fastidiosa (strain 9a5c).